Consider the following 435-residue polypeptide: Xylose isomerase (435 aa).

Active-site residues include histidine 100 and aspartate 103. Residues glutamate 231, glutamate 267, histidine 270, aspartate 295, aspartate 306, aspartate 308, and aspartate 338 each contribute to the Mg(2+) site.

Belongs to the xylose isomerase family. Homotetramer. Mg(2+) serves as cofactor.

The protein localises to the cytoplasm. It catalyses the reaction alpha-D-xylose = alpha-D-xylulofuranose. The sequence is that of Xylose isomerase from Brucella anthropi (strain ATCC 49188 / DSM 6882 / CCUG 24695 / JCM 21032 / LMG 3331 / NBRC 15819 / NCTC 12168 / Alc 37) (Ochrobactrum anthropi).